The primary structure comprises 812 residues: Valine--tRNA ligase (812 aa).

The short motif at 46-56 (PTVSGQLHIGH) is the 'HIGH' region element. A 'KMSKS' region motif is present at residues 536 to 540 (KMSKS). Lys-539 lines the ATP pocket.

This sequence belongs to the class-I aminoacyl-tRNA synthetase family. ValS type 2 subfamily. As to quaternary structure, monomer.

Its subcellular location is the cytoplasm. It carries out the reaction tRNA(Val) + L-valine + ATP = L-valyl-tRNA(Val) + AMP + diphosphate. In terms of biological role, catalyzes the attachment of valine to tRNA(Val). As ValRS can inadvertently accommodate and process structurally similar amino acids such as threonine, to avoid such errors, it has a 'posttransfer' editing activity that hydrolyzes mischarged Thr-tRNA(Val) in a tRNA-dependent manner. In Rickettsia akari (strain Hartford), this protein is Valine--tRNA ligase.